The following is a 469-amino-acid chain: 1-aminocyclopropane-1-carboxylate synthase 8 (469 aa).

Substrate contacts are provided by glutamate 47 and tyrosine 85. Residue lysine 272 is modified to N6-(pyridoxal phosphate)lysine.

It belongs to the class-I pyridoxal-phosphate-dependent aminotransferase family. As to quaternary structure, homodimer and heterodimer. In vivo, the relevance of heterodimerization with other ACS enzymes is however unsure. Interacts with GRF3. The cofactor is pyridoxal 5'-phosphate. In terms of processing, may be processed at its C-terminus. In terms of tissue distribution, expressed in roots. Expressed at low level in flowers and siliques.

The catalysed reaction is S-adenosyl-L-methionine = 1-aminocyclopropane-1-carboxylate + S-methyl-5'-thioadenosine + H(+). Its pathway is alkene biosynthesis; ethylene biosynthesis via S-adenosyl-L-methionine; ethylene from S-adenosyl-L-methionine: step 1/2. Its function is as follows. 1-aminocyclopropane-1-carboxylate synthase (ACS) enzymes catalyze the conversion of S-adenosyl-L-methionine (SAM) into 1-aminocyclopropane-1-carboxylate (ACC), a direct precursor of ethylene. This is 1-aminocyclopropane-1-carboxylate synthase 8 (ACS8) from Arabidopsis thaliana (Mouse-ear cress).